The sequence spans 546 residues: CTP synthase (546 aa).

An amidoligase domain region spans residues 1–265; sequence MTKYIFVTGG…DDIIAEQLQL (265 aa). Residue Ser-13 coordinates CTP. Residue Ser-13 participates in UTP binding. ATP is bound by residues 14-19 and Asp-71; that span reads SLGKGI. Asp-71 and Glu-139 together coordinate Mg(2+). Residues 146–148, 186–191, and Lys-222 each bind CTP; these read DIE and KTKPTQ. Residues 186 to 191 and Lys-222 contribute to the UTP site; that span reads KTKPTQ. Residues 290 to 542 form the Glutamine amidotransferase type-1 domain; it reads KIAMVGKYVD…VKAALAHQAD (253 aa). Position 351 (Gly-351) interacts with L-glutamine. Catalysis depends on Cys-378, which acts as the Nucleophile; for glutamine hydrolysis. L-glutamine is bound by residues 379–382, Glu-402, and Arg-469; that span reads LGMQ. Residues His-515 and Glu-517 contribute to the active site.

It belongs to the CTP synthase family. As to quaternary structure, homotetramer.

The catalysed reaction is UTP + L-glutamine + ATP + H2O = CTP + L-glutamate + ADP + phosphate + 2 H(+). The enzyme catalyses L-glutamine + H2O = L-glutamate + NH4(+). It carries out the reaction UTP + NH4(+) + ATP = CTP + ADP + phosphate + 2 H(+). It functions in the pathway pyrimidine metabolism; CTP biosynthesis via de novo pathway; CTP from UDP: step 2/2. With respect to regulation, allosterically activated by GTP, when glutamine is the substrate; GTP has no effect on the reaction when ammonia is the substrate. The allosteric effector GTP functions by stabilizing the protein conformation that binds the tetrahedral intermediate(s) formed during glutamine hydrolysis. Inhibited by the product CTP, via allosteric rather than competitive inhibition. Functionally, catalyzes the ATP-dependent amination of UTP to CTP with either L-glutamine or ammonia as the source of nitrogen. Regulates intracellular CTP levels through interactions with the four ribonucleotide triphosphates. The sequence is that of CTP synthase from Chromobacterium violaceum (strain ATCC 12472 / DSM 30191 / JCM 1249 / CCUG 213 / NBRC 12614 / NCIMB 9131 / NCTC 9757 / MK).